Reading from the N-terminus, the 419-residue chain is UDP-N-acetylglucosamine 1-carboxyvinyltransferase 2 (419 aa).

Lysine 22–asparagine 23 provides a ligand contact to phosphoenolpyruvate. Arginine 92 serves as a coordination point for UDP-N-acetyl-alpha-D-glucosamine. Aspartate 116 functions as the Proton donor in the catalytic mechanism. Residues arginine 121–glutamine 125, aspartate 306, and leucine 328 each bind UDP-N-acetyl-alpha-D-glucosamine.

Belongs to the EPSP synthase family. MurA subfamily.

Its subcellular location is the cytoplasm. It carries out the reaction phosphoenolpyruvate + UDP-N-acetyl-alpha-D-glucosamine = UDP-N-acetyl-3-O-(1-carboxyvinyl)-alpha-D-glucosamine + phosphate. It functions in the pathway cell wall biogenesis; peptidoglycan biosynthesis. In terms of biological role, cell wall formation. Adds enolpyruvyl to UDP-N-acetylglucosamine. The protein is UDP-N-acetylglucosamine 1-carboxyvinyltransferase 2 of Latilactobacillus sakei subsp. sakei (strain 23K) (Lactobacillus sakei subsp. sakei).